Here is a 52-residue protein sequence, read N- to C-terminus: Large ribosomal subunit protein eL39 (52 aa).

The protein belongs to the eukaryotic ribosomal protein eL39 family.

The chain is Large ribosomal subunit protein eL39 from Desulfurococcus amylolyticus (strain DSM 18924 / JCM 16383 / VKM B-2413 / 1221n) (Desulfurococcus kamchatkensis).